We begin with the raw amino-acid sequence, 338 residues long: Ketol-acid reductoisomerase (NADP(+)) (338 aa).

Positions 1-181 (MQVYYDKDCD…GGGRTGIIET (181 aa)) constitute a KARI N-terminal Rossmann domain. NADP(+)-binding positions include 24 to 27 (YGSQ), Arg47, Ser50, Ser52, and 82 to 85 (DEFQ). Residue His107 is part of the active site. Gly133 is a binding site for NADP(+). The region spanning 182 to 327 (TFKDETETDL…EKLRSMMPWI (146 aa)) is the KARI C-terminal knotted domain. The Mg(2+) site is built by Asp190, Glu194, Glu226, and Glu230. Ser251 is a substrate binding site.

Belongs to the ketol-acid reductoisomerase family. Requires Mg(2+) as cofactor.

It carries out the reaction (2R)-2,3-dihydroxy-3-methylbutanoate + NADP(+) = (2S)-2-acetolactate + NADPH + H(+). The catalysed reaction is (2R,3R)-2,3-dihydroxy-3-methylpentanoate + NADP(+) = (S)-2-ethyl-2-hydroxy-3-oxobutanoate + NADPH + H(+). It functions in the pathway amino-acid biosynthesis; L-isoleucine biosynthesis; L-isoleucine from 2-oxobutanoate: step 2/4. Its pathway is amino-acid biosynthesis; L-valine biosynthesis; L-valine from pyruvate: step 2/4. In terms of biological role, involved in the biosynthesis of branched-chain amino acids (BCAA). Catalyzes an alkyl-migration followed by a ketol-acid reduction of (S)-2-acetolactate (S2AL) to yield (R)-2,3-dihydroxy-isovalerate. In the isomerase reaction, S2AL is rearranged via a Mg-dependent methyl migration to produce 3-hydroxy-3-methyl-2-ketobutyrate (HMKB). In the reductase reaction, this 2-ketoacid undergoes a metal-dependent reduction by NADPH to yield (R)-2,3-dihydroxy-isovalerate. In Hahella chejuensis (strain KCTC 2396), this protein is Ketol-acid reductoisomerase (NADP(+)).